Consider the following 516-residue polypeptide: Protein P54 (516 aa).

The N-terminal stretch at 1 to 27 is a signal peptide; sequence MKKSLLSAVMLSSIALTAVGSPIAAAA. The tract at residues 208–397 is disordered; it reads ATAEDKKADL…PAPAPAPNPS (190 aa). The segment covering 210-236 has biased composition (basic and acidic residues); that stretch reads AEDKKADLNRKKAEAEAEQARIREQAR. Composition is skewed to low complexity over residues 237–247 and 257–380; these read LAEQARQQAAQ and QAAA…TVTP. Residues 381–395 are compositionally biased toward pro residues; the sequence is APTPTPTPAPAPAPN. A NlpC/P60 domain is found at 399–516; it reads SVNGAAIVAE…WYTPDFAVSM (118 aa). Cysteine 429 (nucleophile) is an active-site residue. The active-site Proton acceptor is the histidine 480. Residue histidine 492 is part of the active site.

The protein belongs to the peptidase C40 family.

It localises to the secreted. The protein resides in the cell wall. The protein is Protein P54 of Enterococcus faecium (Streptococcus faecium).